The following is a 690-amino-acid chain: Elongation factor G (690 aa).

The region spanning 8-283 is the tr-type G domain; the sequence is SRCRNIGIMA…AVVDFLPSPS (276 aa). Residues 17–24, 81–85, and 135–138 contribute to the GTP site; these read AHIDAGKT, DTPGH, and NKMD.

Belongs to the TRAFAC class translation factor GTPase superfamily. Classic translation factor GTPase family. EF-G/EF-2 subfamily.

The protein localises to the cytoplasm. Functionally, catalyzes the GTP-dependent ribosomal translocation step during translation elongation. During this step, the ribosome changes from the pre-translocational (PRE) to the post-translocational (POST) state as the newly formed A-site-bound peptidyl-tRNA and P-site-bound deacylated tRNA move to the P and E sites, respectively. Catalyzes the coordinated movement of the two tRNA molecules, the mRNA and conformational changes in the ribosome. The chain is Elongation factor G from Anaplasma marginale (strain Florida).